The chain runs to 193 residues: dCTP deaminase (193 aa).

DCTP is bound by residues 110 to 115 (RSSLAR), aspartate 128, 136 to 138 (VLE), tyrosine 171, lysine 178, and glutamine 182. Catalysis depends on glutamate 138, which acts as the Proton donor/acceptor. The interval 169–193 (RPYNRREDAKYRNQQGAVASRIDKD) is disordered.

Belongs to the dCTP deaminase family. In terms of assembly, homotrimer.

It carries out the reaction dCTP + H2O + H(+) = dUTP + NH4(+). The protein operates within pyrimidine metabolism; dUMP biosynthesis; dUMP from dCTP (dUTP route): step 1/2. Functionally, catalyzes the deamination of dCTP to dUTP. This Escherichia coli O8 (strain IAI1) protein is dCTP deaminase.